We begin with the raw amino-acid sequence, 312 residues long: tRNA pseudouridine synthase B (312 aa).

Aspartate 47 acts as the Nucleophile in catalysis.

Belongs to the pseudouridine synthase TruB family. Type 1 subfamily.

The catalysed reaction is uridine(55) in tRNA = pseudouridine(55) in tRNA. Its function is as follows. Responsible for synthesis of pseudouridine from uracil-55 in the psi GC loop of transfer RNAs. The chain is tRNA pseudouridine synthase B from Vibrio cholerae serotype O1 (strain M66-2).